The primary structure comprises 425 residues: 5-nitroanthranilic acid aminohydrolase (425 aa).

Aspartate 88 is an active-site residue. Glutamate 158 acts as the Proton acceptor in catalysis.

The protein belongs to the peptidase M20A family. Co(2+) serves as cofactor. The cofactor is Mn(2+). Zn(2+) is required as a cofactor. Requires Fe(2+) as cofactor. It depends on Ni(2+) as a cofactor.

The enzyme catalyses 5-nitroanthranilate + H2O + H(+) = 5-nitrosalicylate + NH4(+). Its function is as follows. Catalyzes the deamination of 5-nitroanthranilate (5NAA) to 5-nitrosalicylate (5NSA), the first step in biodegradation of 5-nitroanthranilate. This is 5-nitroanthranilic acid aminohydrolase (naaA) from Bradyrhizobium sp.